Consider the following 503-residue polypeptide: MGKRVSHNEGADRRPKKKAKNEKPEKETMESPAADVTVDFGSKSDATYVQSQVLSDMPQSEIDQFLATHSIKVTDTSDAPAVRPIISFSHLPSCDSKLYSSLSSFASPTPIQSATWPLLFAGRDVIGIAETGSGKTLAFGLPCLKKILDSGKIKFKNARPAAVIISPTRELAMQIYDQISKYAGSIGIKATCIFGGVKKDEQREALKSAAIVVATPGRLKDLQNDGSVDLGKVKYLVLDEADRMLDKGFEQDIKDIISSTPDSKRQTVMFTATWPPSVRDLAATFMTSAVTVTIGGDPSADPRANTRIKQTVEVVQSHDKEYRLVQLLSENQRGAAALDKVLVFCLYKKEAMRVERLLRNKNFKVAGIHGDLNQHERFKSLDAFKSGAATVLVATDVAARGLDIPSVKLVINVTFPLTVEDYVHRIGRTGRAGAEGRAITLFTETDKAQSGALINVLKAAKQEVPQELLKFGTTVKKKQHGAYGAFFKEADSGKSATKIVFDD.

The segment covering 1 to 13 (MGKRVSHNEGADR) has biased composition (basic and acidic residues). Positions 1 to 37 (MGKRVSHNEGADRRPKKKAKNEKPEKETMESPAADVT) are disordered. Residues 104–112 (SFASPTPIQ) carry the Q motif motif. The 177-residue stretch at 116–292 (WPLLFAGRDV…ATFMTSAVTV (177 aa)) folds into the Helicase ATP-binding domain. 129-136 (AETGSGKT) provides a ligand contact to ATP. Positions 239–242 (DEAD) match the DEAD box motif. One can recognise a Helicase C-terminal domain in the interval 323-472 (RLVQLLSENQ…EVPQELLKFG (150 aa)).

Belongs to the DEAD box helicase family. DDX5/DBP2 subfamily.

The protein resides in the nucleus. The protein localises to the nucleolus. It carries out the reaction ATP + H2O = ADP + phosphate + H(+). In terms of biological role, ATP-dependent RNA helicase required for 60S ribosomal subunit synthesis. Involved in efficient pre-rRNA processing, predominantly at site A3, which is necessary for the normal formation of 25S and 5.8S rRNAs. This is ATP-dependent RNA helicase dbp3 (dbp3) from Aspergillus clavatus (strain ATCC 1007 / CBS 513.65 / DSM 816 / NCTC 3887 / NRRL 1 / QM 1276 / 107).